The primary structure comprises 252 residues: tRNA pseudouridine synthase A (252 aa).

The active-site Nucleophile is the aspartate 52. Tyrosine 110 contributes to the substrate binding site.

The protein belongs to the tRNA pseudouridine synthase TruA family. Homodimer.

The enzyme catalyses uridine(38/39/40) in tRNA = pseudouridine(38/39/40) in tRNA. Formation of pseudouridine at positions 38, 39 and 40 in the anticodon stem and loop of transfer RNAs. The protein is tRNA pseudouridine synthase A of Syntrophotalea carbinolica (strain DSM 2380 / NBRC 103641 / GraBd1) (Pelobacter carbinolicus).